A 132-amino-acid polypeptide reads, in one-letter code: Small ribosomal subunit protein uS8c (132 aa).

It belongs to the universal ribosomal protein uS8 family. As to quaternary structure, part of the 30S ribosomal subunit.

It localises to the plastid. Its subcellular location is the chloroplast. Its function is as follows. One of the primary rRNA binding proteins, it binds directly to 16S rRNA central domain where it helps coordinate assembly of the platform of the 30S subunit. This Physcomitrium patens (Spreading-leaved earth moss) protein is Small ribosomal subunit protein uS8c (rps8).